The chain runs to 150 residues: SsrA-binding protein (150 aa).

Belongs to the SmpB family.

It localises to the cytoplasm. In terms of biological role, required for rescue of stalled ribosomes mediated by trans-translation. Binds to transfer-messenger RNA (tmRNA), required for stable association of tmRNA with ribosomes. tmRNA and SmpB together mimic tRNA shape, replacing the anticodon stem-loop with SmpB. tmRNA is encoded by the ssrA gene; the 2 termini fold to resemble tRNA(Ala) and it encodes a 'tag peptide', a short internal open reading frame. During trans-translation Ala-aminoacylated tmRNA acts like a tRNA, entering the A-site of stalled ribosomes, displacing the stalled mRNA. The ribosome then switches to translate the ORF on the tmRNA; the nascent peptide is terminated with the 'tag peptide' encoded by the tmRNA and targeted for degradation. The ribosome is freed to recommence translation, which seems to be the essential function of trans-translation. This is SsrA-binding protein from Chlamydia caviae (strain ATCC VR-813 / DSM 19441 / 03DC25 / GPIC) (Chlamydophila caviae).